The following is a 499-amino-acid chain: MSQLEHNIGLSIFEPVAKHRANRIVCTIGPSTQSVEALKNLMKSGMSVARMNFSHGSHEYHQTTINNVRAAAAELGLHIGIALDTKGPEIRTGLFKDGEVTFAPGDIVCVTTDPAYEKVGTKEKFYIDYPQLTKAVPVGGSIYVDDGVMTLRVLSKEDDRTLKCHVNNHHRLTDRRGINLPGCEVDLPAVSEKDRKDLEFGVAQGVDMIFASFIRTAEQVREVRAALGEKGKDILIISKIENHQGVQNIDSIIEASNGIMVARGDLGVEIPAEKVCVAQMCIISKCNVVGKPVICATQMLESMTSNPRPTRAEVSDVANAVLNGADCVMLSGETAKGKYPNEVVQYMARICVEAQSATHDTVMFNSIKNLQKIPMCPEEAVCSSAVASAFEVQAKAMLVLSNTGRSARLISKYRPNCPIICVTTRLQTCRQLNVTRSVVSVFYDAAKSGEDKDKEKRVKLGLDFAKKEKYASTGDVVVVVHADHSVKGYPNQTRLIYLP.

R50 provides a ligand contact to substrate. Positions 52, 54, 84, and 85 each coordinate K(+). 52-55 contacts ATP; it reads NFSH. Residue R91 coordinates ATP. Position 241 (E241) interacts with Mg(2+). Substrate is bound by residues G264, D265, and T297. Mg(2+) is bound at residue D265.

Belongs to the pyruvate kinase family. Homotetramer. Mg(2+) is required as a cofactor. Requires K(+) as cofactor.

It catalyses the reaction pyruvate + ATP = phosphoenolpyruvate + ADP + H(+). It functions in the pathway carbohydrate degradation; glycolysis; pyruvate from D-glyceraldehyde 3-phosphate: step 5/5. Activated by fructose 2,6-bisphosphate, activated by the effector in a cooperative manner. This chain is Pyruvate kinase 2 (PYK2), found in Trypanosoma brucei brucei.